Here is a 406-residue protein sequence, read N- to C-terminus: Serine/threonine transporter SstT (406 aa).

The next 9 membrane-spanning stretches (helical) occupy residues 15-35 (LVIQ…VSPS), 47-67 (FVGA…AASI), 81-101 (IIVM…VLSF), 140-160 (ALMS…GLAL), 191-211 (FGIF…ALAG), 215-235 (LLVV…PAMV), 289-309 (IPLG…TLTL), 315-335 (MGIE…AVSA), and 362-382 (IAMQ…SAET).

It belongs to the dicarboxylate/amino acid:cation symporter (DAACS) (TC 2.A.23) family.

It is found in the cell inner membrane. The catalysed reaction is L-serine(in) + Na(+)(in) = L-serine(out) + Na(+)(out). It carries out the reaction L-threonine(in) + Na(+)(in) = L-threonine(out) + Na(+)(out). In terms of biological role, involved in the import of serine and threonine into the cell, with the concomitant import of sodium (symport system). The polypeptide is Serine/threonine transporter SstT (Vibrio vulnificus (strain YJ016)).